The chain runs to 308 residues: Elongation factor Ts (308 aa).

An involved in Mg(2+) ion dislocation from EF-Tu region spans residues 80–83 (TDFV).

The protein belongs to the EF-Ts family.

Its subcellular location is the cytoplasm. In terms of biological role, associates with the EF-Tu.GDP complex and induces the exchange of GDP to GTP. It remains bound to the aminoacyl-tRNA.EF-Tu.GTP complex up to the GTP hydrolysis stage on the ribosome. This Rhizobium leguminosarum bv. trifolii (strain WSM2304) protein is Elongation factor Ts.